Here is a 204-residue protein sequence, read N- to C-terminus: Large ribosomal subunit protein uL22m (204 aa).

A mitochondrion-targeting transit peptide spans 1 to 27 (MAASITASVWGTLLKIHRGLTASGCLP).

Belongs to the universal ribosomal protein uL22 family. Component of the mitochondrial ribosome large subunit (39S) which comprises a 16S rRNA and about 50 distinct proteins.

It localises to the mitochondrion. The chain is Large ribosomal subunit protein uL22m (mrpl22) from Xenopus tropicalis (Western clawed frog).